A 172-amino-acid chain; its full sequence is 3-hydroxydecanoyl-[acyl-carrier-protein] dehydratase (172 aa).

His71 is an active-site residue.

Belongs to the thioester dehydratase family. FabA subfamily. Homodimer.

It is found in the cytoplasm. It catalyses the reaction a (3R)-hydroxyacyl-[ACP] = a (2E)-enoyl-[ACP] + H2O. The enzyme catalyses (3R)-hydroxydecanoyl-[ACP] = (2E)-decenoyl-[ACP] + H2O. The catalysed reaction is (2E)-decenoyl-[ACP] = (3Z)-decenoyl-[ACP]. It participates in lipid metabolism; fatty acid biosynthesis. Functionally, necessary for the introduction of cis unsaturation into fatty acids. Catalyzes the dehydration of (3R)-3-hydroxydecanoyl-ACP to E-(2)-decenoyl-ACP and then its isomerization to Z-(3)-decenoyl-ACP. Can catalyze the dehydratase reaction for beta-hydroxyacyl-ACPs with saturated chain lengths up to 16:0, being most active on intermediate chain length. This is 3-hydroxydecanoyl-[acyl-carrier-protein] dehydratase from Brucella ovis (strain ATCC 25840 / 63/290 / NCTC 10512).